We begin with the raw amino-acid sequence, 268 residues long: Small ribosomal subunit protein uS3 (268 aa).

One can recognise a KH type-2 domain in the interval 38-106 (IRKLLATGME…QVQLNILEVK (69 aa)). The disordered stretch occupies residues 218-268 (VAAPAGDRPRRERPSRPRRSGATGTTATSTEAGRAATATADAPATTEQKEG). Residues 237–268 (SGATGTTATSTEAGRAATATADAPATTEQKEG) are compositionally biased toward low complexity.

It belongs to the universal ribosomal protein uS3 family. In terms of assembly, part of the 30S ribosomal subunit. Forms a tight complex with proteins S10 and S14.

Binds the lower part of the 30S subunit head. Binds mRNA in the 70S ribosome, positioning it for translation. This Rhodococcus jostii (strain RHA1) protein is Small ribosomal subunit protein uS3.